The following is a 629-amino-acid chain: Citrate (Re)-synthase (629 aa).

One can recognise a Pyruvate carboxyltransferase domain in the interval 59–329 (IFITDTTFRD…TNGIDTTVIT (271 aa)). A Cache domain is found at 497 to 601 (VMQRFIEEYP…GVDIRVEDLV (105 aa)).

This sequence belongs to the alpha-IPM synthase/homocitrate synthase family. Homotetramer. The cofactor is Co(2+). Requires Mn(2+) as cofactor.

The catalysed reaction is oxaloacetate + acetyl-CoA + H2O = citrate + CoA + H(+). Inhibited by p-hydroxymercuribenzoate and EDTA. In terms of biological role, catalyzes the condensation of the acetyl group of acetyl-CoA with oxaloacetate to form citrate. In Syntrophus aciditrophicus (strain SB), this protein is Citrate (Re)-synthase.